The chain runs to 278 residues: ADP-dependent (S)-NAD(P)H-hydrate dehydratase (278 aa).

The region spanning Asp-4–Leu-276 is the YjeF C-terminal domain. Residues Ala-39, Gly-102, and His-152 each coordinate (6S)-NADPHX. Gly-216 provides a ligand contact to AMP. Position 217 (Asp-217) interacts with (6S)-NADPHX.

It belongs to the NnrD/CARKD family. As to quaternary structure, homotetramer. The cofactor is Mg(2+).

It catalyses the reaction (6S)-NADHX + ADP = AMP + phosphate + NADH + H(+). The enzyme catalyses (6S)-NADPHX + ADP = AMP + phosphate + NADPH + H(+). Its function is as follows. Catalyzes the dehydration of the S-form of NAD(P)HX at the expense of ADP, which is converted to AMP. Together with NAD(P)HX epimerase, which catalyzes the epimerization of the S- and R-forms, the enzyme allows the repair of both epimers of NAD(P)HX, a damaged form of NAD(P)H that is a result of enzymatic or heat-dependent hydration. This chain is ADP-dependent (S)-NAD(P)H-hydrate dehydratase, found in Streptococcus thermophilus.